Reading from the N-terminus, the 106-residue chain is Iron-sulfur cluster assembly protein CyaY (106 aa).

It belongs to the frataxin family.

In terms of biological role, involved in iron-sulfur (Fe-S) cluster assembly. May act as a regulator of Fe-S biogenesis. The sequence is that of Iron-sulfur cluster assembly protein CyaY from Escherichia coli O9:H4 (strain HS).